A 267-amino-acid chain; its full sequence is tRNA pseudouridine synthase A (267 aa).

Asp-55 serves as the catalytic Nucleophile. Tyr-109 contributes to the substrate binding site.

Belongs to the tRNA pseudouridine synthase TruA family.

The catalysed reaction is uridine(38/39/40) in tRNA = pseudouridine(38/39/40) in tRNA. Its function is as follows. Formation of pseudouridine at positions 38, 39 and 40 in the anticodon stem and loop of transfer RNAs. This chain is tRNA pseudouridine synthase A, found in Natronomonas pharaonis (strain ATCC 35678 / DSM 2160 / CIP 103997 / JCM 8858 / NBRC 14720 / NCIMB 2260 / Gabara) (Halobacterium pharaonis).